Reading from the N-terminus, the 88-residue chain is UPF0367 protein Synpcc7942_1638 (88 aa).

The protein belongs to the UPF0367 family.

The polypeptide is UPF0367 protein Synpcc7942_1638 (Synechococcus elongatus (strain ATCC 33912 / PCC 7942 / FACHB-805) (Anacystis nidulans R2)).